The following is a 358-amino-acid chain: uncharacterized protein (358 aa).

Residues 1-47 (MGNVAGETRANVIPLHTNRSRVAARRRAGQRAESRQHPSLLSDPNDR) form a disordered region. Basic residues predominate over residues 18 to 29 (NRSRVAARRRAG).

This sequence to M.leprae ML2427.

This is an uncharacterized protein from Mycobacterium tuberculosis (strain CDC 1551 / Oshkosh).